The sequence spans 148 residues: Probable calcium-binding protein CML14 (148 aa).

3 consecutive EF-hand domains span residues 9–44, 80–115, and 116–148; these read DQVS…LGGN, PFDR…IGEK, and LQPS…MVAK. Ca(2+) is bound by residues Asp22, Asp24, Asp26, Lys28, and Glu33.

Its function is as follows. Potential calcium sensor. This is Probable calcium-binding protein CML14 (CML14) from Arabidopsis thaliana (Mouse-ear cress).